The sequence spans 546 residues: Phosphomethylpyrimidine synthase (546 aa).

Substrate is bound by residues asparagine 145, methionine 174, tyrosine 203, histidine 239, 259–261, 300–303, and glutamate 339; these read SRG and DGLR. Histidine 343 is a Zn(2+) binding site. Tyrosine 366 serves as a coordination point for substrate. A Zn(2+)-binding site is contributed by histidine 407. 3 residues coordinate [4Fe-4S] cluster: cysteine 487, cysteine 490, and cysteine 495.

This sequence belongs to the ThiC family. It depends on [4Fe-4S] cluster as a cofactor.

It carries out the reaction 5-amino-1-(5-phospho-beta-D-ribosyl)imidazole + S-adenosyl-L-methionine = 4-amino-2-methyl-5-(phosphooxymethyl)pyrimidine + CO + 5'-deoxyadenosine + formate + L-methionine + 3 H(+). It participates in cofactor biosynthesis; thiamine diphosphate biosynthesis. Functionally, catalyzes the synthesis of the hydroxymethylpyrimidine phosphate (HMP-P) moiety of thiamine from aminoimidazole ribotide (AIR) in a radical S-adenosyl-L-methionine (SAM)-dependent reaction. The protein is Phosphomethylpyrimidine synthase of Mycobacterium marinum (strain ATCC BAA-535 / M).